A 302-amino-acid chain; its full sequence is uncharacterized protein (302 aa).

The next 9 membrane-spanning stretches (helical) occupy residues 1-21, 33-53, 67-87, 101-121, 124-144, 185-205, 220-240, 253-273, and 274-294; these read MSWI…LGVI, SLLF…YIYY, FLIE…IFQF, FGII…IILI, FSWL…KTFY, YVTP…VFAI, IIYT…FCLA, LALI…IAIP, and AYIS…ASVI.

Belongs to the TerC family.

Its subcellular location is the cell membrane. This is an uncharacterized protein from Rickettsia bellii (strain RML369-C).